The following is a 337-amino-acid chain: Putative high mobility group B protein 11 (337 aa).

The 92-residue stretch at 34 to 125 (VRNPELFWEM…MLFEFEHLYY (92 aa)) folds into the ARID domain. Disordered stretches follow at residues 197–221 (TKRG…QRTG) and 298–337 (AGTS…EVSQ). The segment at residues 215–282 (PKRQRTGYNF…RYKMEILQYR (68 aa)) is a DNA-binding region (HMG box). Residues 319–329 (TDACTSASSAA) show a composition bias toward low complexity.

The protein belongs to the HMGB family.

Its subcellular location is the nucleus. In terms of biological role, binds preferentially DNA with A/T-rich content. In Arabidopsis thaliana (Mouse-ear cress), this protein is Putative high mobility group B protein 11 (HMGB11).